Consider the following 594-residue polypeptide: Interactor of HORMAD1 protein 1 (594 aa).

Coiled-coil stretches lie at residues 109 to 135, 165 to 189, and 219 to 245; these read VGKS…SETL, QSIL…NDLV, and EMKS…CEQL. Over residues 434–443 the composition is skewed to basic and acidic residues; it reads VEMRGKDKKQ. A disordered region spans residues 434-454; sequence VEMRGKDKKQQPRKAHRAHRG. The segment covering 444–454 has biased composition (basic residues); it reads QPRKAHRAHRG. A phosphoserine mark is found at Ser588 and Ser589.

As to quaternary structure, part of the MCD recombinosome complex, at least composed of IHO1, REC114 and MEI4. Interacts with REC114. Interacts with MEI4. Interacts with HORMAD1. Interacts with ANKRD31.

The protein resides in the chromosome. In terms of biological role, required for DNA double-strand breaks (DSBs) formation in unsynapsed regions during meiotic recombination. Probably acts by forming a complex with MEI4 and REC114, which activates DSBs formation in unsynapsed regions, an essential step to ensure completion of synapsis. Not required for HORMAD1 functions in pairing-independent synaptonemal complex formation, ATR recruitment to unsynapsed axes, meiotic silencing of unsynapsed chromatin (MSUC) or meiotic surveillance. The sequence is that of Interactor of HORMAD1 protein 1 from Homo sapiens (Human).